The following is a 266-amino-acid chain: tRNA pseudouridine synthase A (266 aa).

The active-site Nucleophile is D57. Y115 lines the substrate pocket.

It belongs to the tRNA pseudouridine synthase TruA family. As to quaternary structure, homodimer.

The enzyme catalyses uridine(38/39/40) in tRNA = pseudouridine(38/39/40) in tRNA. In terms of biological role, formation of pseudouridine at positions 38, 39 and 40 in the anticodon stem and loop of transfer RNAs. The polypeptide is tRNA pseudouridine synthase A (Buchnera aphidicola subsp. Acyrthosiphon pisum (strain Tuc7)).